Reading from the N-terminus, the 309-residue chain is Homoserine kinase (309 aa).

Residue 91-101 coordinates ATP; the sequence is PIGSGLGSSAC.

The protein belongs to the GHMP kinase family. Homoserine kinase subfamily.

It localises to the cytoplasm. The enzyme catalyses L-homoserine + ATP = O-phospho-L-homoserine + ADP + H(+). It functions in the pathway amino-acid biosynthesis; L-threonine biosynthesis; L-threonine from L-aspartate: step 4/5. Its function is as follows. Catalyzes the ATP-dependent phosphorylation of L-homoserine to L-homoserine phosphate. The protein is Homoserine kinase of Citrobacter koseri (strain ATCC BAA-895 / CDC 4225-83 / SGSC4696).